The primary structure comprises 338 residues: 2-methyl-6-phytyl-1,4-hydroquinone methyltransferase, chloroplastic (338 aa).

The transit peptide at 1 to 51 (MASLMLNGAITFPKGLGSPGSNLHARSIPRPTLLSVTRTSTPRLSVATRCS) directs the protein to the chloroplast. Over 52–307 (SSSVSSSRPS…VNNPFSFLGR (256 aa)) the chain is Chloroplast intermembrane. Residues 114-123 (VVDVGGGTGF) are SAM motif I. The interval 159-172 (CKIVEGDAEDLPFP) is SAM motif II. The tract at residues 200–213 (RVLKIGGKACLIGP) is SAM motif III. The chain crosses the membrane as a helical span at residues 308 to 328 (FLLGTLAAAWFVLIPIYMWIK). The Stromal segment spans residues 329 to 338 (DQIVPKDQPI).

It belongs to the class I-like SAM-binding methyltransferase superfamily. MPBQ/MBSQ MT family.

It is found in the plastid. It localises to the chloroplast inner membrane. The enzyme catalyses 2-methyl-6-phytyl-1,4-benzene-1,4-diol + S-adenosyl-L-methionine = 2,3-dimethyl-6-phytylbenzene-1,4-diol + S-adenosyl-L-homocysteine + H(+). It catalyses the reaction 2-methyl-6-(all-trans-nonaprenyl)benzene-1,4-diol + S-adenosyl-L-methionine = plastoquinol-9 + S-adenosyl-L-homocysteine + H(+). It carries out the reaction 6-geranylgeranyl-2-methylbenzene-1,4-diol + S-adenosyl-L-methionine = 6-geranylgeranyl-2,3-dimethylbenzene-1,4-diol + S-adenosyl-L-homocysteine + H(+). The protein operates within cofactor biosynthesis; tocopherol biosynthesis. Functionally, involved in a key methylation step in both tocopherols (vitamin E) and plastoquinone synthesis. Catalyzes the conversion of 2-methyl-6-phytyl-1,4-hydroquinone (MPBQ) to 2,3-dimethyl-6-phytyl-1,4-hydroquinone (DMPQ, a substrate for tocopherol cyclase), and 2-methyl-6-solanyl-1,4-benzoquinone (MSBQ) to plastoquinone. In Arabidopsis thaliana (Mouse-ear cress), this protein is 2-methyl-6-phytyl-1,4-hydroquinone methyltransferase, chloroplastic (VTE3).